The sequence spans 559 residues: Protein NRT1/ PTR FAMILY 2.8 (559 aa).

The next 11 helical transmembrane spans lie at 57-77 (GVFL…LTLA), 92-112 (LLLG…TAAL), 132-152 (KWQL…AGGV), 178-198 (FFNW…TGVV), 206-226 (WVIG…TFVI), 321-341 (LKCV…FILT), 374-394 (VSMI…IPIV), 404-424 (LTLK…VAGF), 437-457 (GSFV…LAGL), 481-501 (VAGA…TLLI), and 529-549 (YFFI…LFAS).

It belongs to the major facilitator superfamily. Proton-dependent oligopeptide transporter (POT/PTR) (TC 2.A.17) family. Expressed in flowers.

Its subcellular location is the membrane. The protein is Protein NRT1/ PTR FAMILY 2.8 (NPF2.8) of Arabidopsis thaliana (Mouse-ear cress).